We begin with the raw amino-acid sequence, 258 residues long: 4-hydroxy-2-oxovalerate aldolase (258 aa).

Residue histidine 48 is the Proton acceptor of the active site. Glutamine 149 is a substrate binding site. Glutamate 151 contacts Mg(2+). Residues alanine 176 and aspartate 177 each contribute to the substrate site. Aspartate 177 lines the Mg(2+) pocket.

It belongs to the HpcH/HpaI aldolase family.

The catalysed reaction is (S)-4-hydroxy-2-oxopentanoate = acetaldehyde + pyruvate. Its pathway is xenobiotic degradation; biphenyl degradation. Functionally, catalyzes the reversible retro-aldol cleavage of 4-hydroxy-2-oxovalerate to pyruvate and acetaldehyde. The polypeptide is 4-hydroxy-2-oxovalerate aldolase (bphF) (Rhodococcus jostii (strain RHA1)).